A 508-amino-acid chain; its full sequence is ATP synthase subunit alpha (508 aa).

171 to 178 (GDRQTGKT) is a binding site for ATP.

The protein belongs to the ATPase alpha/beta chains family. As to quaternary structure, F-type ATPases have 2 components, CF(1) - the catalytic core - and CF(0) - the membrane proton channel. CF(1) has five subunits: alpha(3), beta(3), gamma(1), delta(1), epsilon(1). CF(0) has three main subunits: a(1), b(2) and c(9-12). The alpha and beta chains form an alternating ring which encloses part of the gamma chain. CF(1) is attached to CF(0) by a central stalk formed by the gamma and epsilon chains, while a peripheral stalk is formed by the delta and b chains.

The protein localises to the cell membrane. It carries out the reaction ATP + H2O + 4 H(+)(in) = ADP + phosphate + 5 H(+)(out). Functionally, produces ATP from ADP in the presence of a proton gradient across the membrane. The alpha chain is a regulatory subunit. The protein is ATP synthase subunit alpha of Protochlamydia amoebophila (strain UWE25).